The following is a 204-amino-acid chain: UPF0637 protein lin1053 (204 aa).

Belongs to the UPF0637 family.

The chain is UPF0637 protein lin1053 from Listeria innocua serovar 6a (strain ATCC BAA-680 / CLIP 11262).